The following is a 37-amino-acid chain: Large ribosomal subunit protein bL36 (37 aa).

Residues Cys11, Cys14, Cys27, and His32 each coordinate Zn(2+).

The protein belongs to the bacterial ribosomal protein bL36 family. As to quaternary structure, part of the 50S ribosomal subunit. Zn(2+) is required as a cofactor.

In terms of biological role, binds the 23S rRNA. The chain is Large ribosomal subunit protein bL36 (rpmJ) from Deinococcus radiodurans (strain ATCC 13939 / DSM 20539 / JCM 16871 / CCUG 27074 / LMG 4051 / NBRC 15346 / NCIMB 9279 / VKM B-1422 / R1).